Here is a 218-residue protein sequence, read N- to C-terminus: Octanoyltransferase (218 aa).

Residues 30–217 (GEAGELVWLV…SFARNFPPLA (188 aa)) form the BPL/LPL catalytic domain. Substrate contacts are provided by residues 68–75 (RGGQYTYH), 148–150 (AIG), and 161–163 (GIA). The active-site Acyl-thioester intermediate is the C179.

Belongs to the LipB family.

Its subcellular location is the cytoplasm. The catalysed reaction is octanoyl-[ACP] + L-lysyl-[protein] = N(6)-octanoyl-L-lysyl-[protein] + holo-[ACP] + H(+). The protein operates within protein modification; protein lipoylation via endogenous pathway; protein N(6)-(lipoyl)lysine from octanoyl-[acyl-carrier-protein]: step 1/2. Its function is as follows. Catalyzes the transfer of endogenously produced octanoic acid from octanoyl-acyl-carrier-protein onto the lipoyl domains of lipoate-dependent enzymes. Lipoyl-ACP can also act as a substrate although octanoyl-ACP is likely to be the physiological substrate. The polypeptide is Octanoyltransferase (Paracoccus denitrificans (strain Pd 1222)).